Reading from the N-terminus, the 117-residue chain is MITILLVMLGGGIGAVLRALITNICQRLFNSKIPIATSIVNITGSLIIGFMMGHALDSHHMFPFFVTGVLGGLTTFSTLSSELVNMLSPQFKPIRFVVYSLLQFILGFIACFYGYRI.

A run of 4 helical transmembrane segments spans residues 1–21, 33–53, 61–81, and 94–114; these read MITI…RALI, IPIA…FMMG, MFPF…TLSS, and IRFV…CFYG. Residues glycine 71 and threonine 74 each coordinate Na(+).

It belongs to the fluoride channel Fluc/FEX (TC 1.A.43) family.

It localises to the cell membrane. The catalysed reaction is fluoride(in) = fluoride(out). Its activity is regulated as follows. Na(+) is not transported, but it plays an essential structural role and its presence is essential for fluoride channel function. Functionally, fluoride-specific ion channel. Important for reducing fluoride concentration in the cell, thus reducing its toxicity. The sequence is that of Fluoride-specific ion channel FluC 2 from Staphylococcus epidermidis (strain ATCC 35984 / DSM 28319 / BCRC 17069 / CCUG 31568 / BM 3577 / RP62A).